Here is a 98-residue protein sequence, read N- to C-terminus: Co-chaperonin GroES (98 aa).

This sequence belongs to the GroES chaperonin family. As to quaternary structure, heptamer of 7 subunits arranged in a ring. Interacts with the chaperonin GroEL.

Its subcellular location is the cytoplasm. In terms of biological role, together with the chaperonin GroEL, plays an essential role in assisting protein folding. The GroEL-GroES system forms a nano-cage that allows encapsulation of the non-native substrate proteins and provides a physical environment optimized to promote and accelerate protein folding. GroES binds to the apical surface of the GroEL ring, thereby capping the opening of the GroEL channel. This Brucella abortus (strain S19) protein is Co-chaperonin GroES.